Consider the following 94-residue polypeptide: MGSELETAMETLINVFHAHSGKEGDKYKLSKKELKELLQTELSGFLDAQKDVDAVDKVMKELDENGDGEVDFQEYVVLVAALTVACNNFFWENS.

2 consecutive EF-hand domains span residues 13–48 (INVF…FLDA) and 50–85 (KDVD…LTVA). Residues lysine 28, glutamate 33, aspartate 63, asparagine 65, aspartate 67, glutamate 69, and glutamate 74 each contribute to the Ca(2+) site. Cysteine 86 carries the post-translational modification S-nitrosocysteine.

The protein belongs to the S-100 family. Dimer of either two alpha chains, or two beta chains, or one alpha and one beta chain. Also forms heterodimers with S100P. Interacts with AGER. Interacts with CAPZA1. Interacts with FKBP4. Interacts with RYR1 and RYR2. Interacts with CACYBP in a calcium-dependent manner. Interacts with PPP5C (via TPR repeats); the interaction is calcium-dependent and modulates PPP5C activity. Interacts with ATP2A2 and PLN in a Ca(2+)-dependent manner. Interacts with mitochondrial F1-ATPase subunits ATP5F1A and ATP5F1B; these interactions increase F1-ATPase activity. Glutathionylated; glutathionylation increases affinity to calcium about 10-fold. In terms of tissue distribution, highly prevalent in heart. Also found in lesser quantities in skeletal muscle and brain.

The protein resides in the cytoplasm. Its subcellular location is the sarcoplasmic reticulum. It is found in the mitochondrion. Small calcium binding protein that plays important roles in several biological processes such as Ca(2+) homeostasis, chondrocyte biology and cardiomyocyte regulation. In response to an increase in intracellular Ca(2+) levels, binds calcium which triggers conformational changes. These changes allow interactions with specific target proteins and modulate their activity. Regulates a network in cardiomyocytes controlling sarcoplasmic reticulum Ca(2+) cycling and mitochondrial function through interaction with the ryanodine receptors RYR1 and RYR2, sarcoplasmic reticulum Ca(2+)-ATPase/ATP2A2 and mitochondrial F1-ATPase. Facilitates diastolic Ca(2+) dissociation and myofilament mechanics in order to improve relaxation during diastole. This chain is Protein S100-A1 (S100A1), found in Homo sapiens (Human).